The primary structure comprises 193 residues: NADH-quinone oxidoreductase subunit B (193 aa).

The [4Fe-4S] cluster site is built by C72, C73, C137, and C167.

The protein belongs to the complex I 20 kDa subunit family. As to quaternary structure, NDH-1 is composed of 14 different subunits. Subunits NuoB, C, D, E, F, and G constitute the peripheral sector of the complex. The cofactor is [4Fe-4S] cluster.

The protein localises to the cell inner membrane. It catalyses the reaction a quinone + NADH + 5 H(+)(in) = a quinol + NAD(+) + 4 H(+)(out). Functionally, NDH-1 shuttles electrons from NADH, via FMN and iron-sulfur (Fe-S) centers, to quinones in the respiratory chain. Couples the redox reaction to proton translocation (for every two electrons transferred, four hydrogen ions are translocated across the cytoplasmic membrane), and thus conserves the redox energy in a proton gradient. This chain is NADH-quinone oxidoreductase subunit B, found in Brucella abortus (strain S19).